We begin with the raw amino-acid sequence, 554 residues long: Outer envelope protein 61 (554 aa).

Over Met-1 to Lys-525 the chain is Cytoplasmic. 2 TPR repeats span residues Ala-103–Ile-136 and Val-180–Asp-213. 2 disordered regions span residues Thr-245 to Val-269 and Ala-395 to Pro-439. Residues Glu-254–Asn-263 are compositionally biased toward basic and acidic residues. Over residues Ser-412–Ser-423 the composition is skewed to low complexity. Residues Trp-526–Leu-546 traverse the membrane as a helical segment. Residues His-547–Asn-554 are Lumenal-facing.

Interacts (via TPR region) with HSP70-1, but not with HSP90-2. Interacts with ERDJ2A and ERDJ2B. In the ER membrane, associates with ERDJ2 in membrane complexes of 140 and 200 kDa and specifically interacts with the HSP70 and HSP90 chaperones via its TPR domain. Ubiquitous. Highest expression in leaves and lowest in roots.

The protein localises to the endoplasmic reticulum membrane. It is found in the plastid. The protein resides in the chloroplast outer membrane. In terms of biological role, plays a role in protein import into the endoplasmic reticulum (ER). May function as chaperone docking protein during post-translational protein translocation into the ER. Chaperone receptor mediating Hsp70-dependent protein targeting to chloroplasts. Interacts specifically with some chloroplast precursors, but not with mitochondrial precursors. Able to select precursors for delivery to the chloroplast translocase independently of Hsp70. The chain is Outer envelope protein 61 (OEP61) from Arabidopsis thaliana (Mouse-ear cress).